The sequence spans 547 residues: Probable ATP-dependent RNA helicase DDX56 (547 aa).

Residues 7-35 carry the Q motif motif; it reads LGFEHMGLDPRLLQAVTDLGWSRPTLIQE. The Helicase ATP-binding domain maps to 38–218; the sequence is IPLALEGKDL…ELILHNPVTL (181 aa). 51–58 contributes to the ATP binding site; it reads ARTGSGKT. Ser-126 is modified (phosphoserine). Position 141 is a phosphothreonine (Thr-141). A DEAD box motif is present at residues 166 to 169; that stretch reads DEAD. Residues 230–424 enclose the Helicase C-terminal domain; the sequence is QLQQFQVVCE…PYQFRMEEIE (195 aa). Composition is skewed to basic residues over residues 506–525 and 532–547; these read RPHKKRKKLSSSCRKAKRAK and SFKHKGKKFRPTAKPS. The interval 506 to 547 is disordered; the sequence is RPHKKRKKLSSSCRKAKRAKSQNPLRSFKHKGKKFRPTAKPS. The residue at position 532 (Ser-532) is a Phosphoserine.

It belongs to the DEAD box helicase family. DDX56/DBP9 subfamily. As to quaternary structure, may form homooligomeric complexes. Interacts with IRF3. Interacts with OCT4 and POU5F1. (Microbial infection) Interacts with West Nile virus capsid protein C. In terms of assembly, (Microbial infection) Interacts with foot-and-mouth disease virus protein 3A; this interaction leads to inhibition of type I interferon production. As to quaternary structure, (Microbial infection) Interacts with EMCV protein 3C; this interaction leads to inhibition of type I interferon production. Detected in heart, brain, liver, pancreas, placenta and lung.

The protein localises to the nucleus. Its subcellular location is the nucleolus. The enzyme catalyses ATP + H2O = ADP + phosphate + H(+). Its function is as follows. Nucleolar RNA helicase that plays a role in various biological processes including innate immunity, ribosome biogenesis or nucleolus organization. Plays an essential role in maintaining nucleolar integrity in planarian stem cells. Maintains embryonic stem cells proliferation by conventional regulation of ribosome assembly and interaction with OCT4 and POU5F1 complex. Regulates antiviral innate immunity by inhibiting the virus-triggered signaling nuclear translocation of IRF3. Mechanistically, acts by disrupting the interaction between IRF3 and importin IPO5. May play a role in later stages of the processing of the pre-ribosomal particles leading to mature 60S ribosomal subunits. Has intrinsic ATPase activity. In terms of biological role, (Microbial infection) Helicase activity is important for packaging viral RNA into virions during West Nile virus infection. Functionally, (Microbial infection) Plays a positive role in foot-and-mouth disease virus replication by inhibiting the phosphorylation of IRF3 leading to inhibition of type I interferon. (Microbial infection) Plays a positive role in EMCV replication by interrupting IRF3 phosphorylation and its nucleus translocation. This is Probable ATP-dependent RNA helicase DDX56 (DDX56) from Homo sapiens (Human).